Here is a 296-residue protein sequence, read N- to C-terminus: Arginase (296 aa).

Positions 98, 124, 126, and 128 each coordinate Mn(2+). Asn130, Ser137, and Asp178 together coordinate L-arginine. Mn(2+)-binding residues include Asp225 and Asp227. 2 residues coordinate L-arginine: Asp227 and Thr239.

It belongs to the arginase family. Monomer. Homodimer; dimerization is dispensable for catalytic activity. Requires Mn(2+) as cofactor.

The catalysed reaction is L-arginine + H2O = urea + L-ornithine. It participates in nitrogen metabolism; urea cycle; L-ornithine and urea from L-arginine: step 1/1. Its activity is regulated as follows. Substitution of the loosely bound surface exposed Mn(2+) with Mg(2+), Zn(2+), Ni(2+) or Co(2+) results in similar catalytic activity, substitution with Cd(2+) and Cu(2+) reduces catalytic activity and substitution with Hg(2+) and Ca(2+) inhibits the enzyme. Inhibited by L-norvaline. Its function is as follows. Catalyzes the hydrolysis of L-arginine into urea and L-ornithine, which is a precursor for polyamine biosynthesis. By depleting host L-arginine, a substrate for nitric oxide synthase (NOS), prevents the production of nitric oxide (NO) by host activated macrophages, and thus allows the parasite to evade host immune response. The chain is Arginase from Entamoeba histolytica (strain ATCC 30459 / HM-1:IMSS / ABRM).